The sequence spans 433 residues: Shufflon protein C' (433 aa).

Positions 1–361 (MKKYDRGWAS…TGAILSCQSG (361 aa)) are constant region. The tract at residues 362 to 433 (RWSGGNKINY…HVDAYCCPFN (72 aa)) is variable region.

This is Shufflon protein C' from Escherichia coli.